The following is a 240-amino-acid chain: MADS-box transcription factor 27 (240 aa).

The MADS-box domain occupies 1–61 (MGRGKIVIRR…GRLYEYSSTS (61 aa)). In terms of domain architecture, K-box spans 86–176 (LKFWQREAAS…YKKISLIRQE (91 aa)). The span at 220-231 (LPQHSDAEQSTA) shows a compositional bias: polar residues. Residues 220 to 240 (LPQHSDAEQSTAPKLGLQLNP) form a disordered region.

As to expression, ubiquitous.

It is found in the nucleus. Its function is as follows. Probable transcription factor. In Oryza sativa subsp. japonica (Rice), this protein is MADS-box transcription factor 27 (MADS27).